A 119-amino-acid polypeptide reads, in one-letter code: UPF0342 protein Athe_0692 (119 aa).

The protein belongs to the UPF0342 family.

The chain is UPF0342 protein Athe_0692 from Caldicellulosiruptor bescii (strain ATCC BAA-1888 / DSM 6725 / KCTC 15123 / Z-1320) (Anaerocellum thermophilum).